Here is a 257-residue protein sequence, read N- to C-terminus: Imidazole glycerol phosphate synthase subunit HisF (257 aa).

Residues D12 and D131 contribute to the active site.

The protein belongs to the HisA/HisF family. In terms of assembly, heterodimer of HisH and HisF.

It is found in the cytoplasm. The catalysed reaction is 5-[(5-phospho-1-deoxy-D-ribulos-1-ylimino)methylamino]-1-(5-phospho-beta-D-ribosyl)imidazole-4-carboxamide + L-glutamine = D-erythro-1-(imidazol-4-yl)glycerol 3-phosphate + 5-amino-1-(5-phospho-beta-D-ribosyl)imidazole-4-carboxamide + L-glutamate + H(+). It functions in the pathway amino-acid biosynthesis; L-histidine biosynthesis; L-histidine from 5-phospho-alpha-D-ribose 1-diphosphate: step 5/9. Functionally, IGPS catalyzes the conversion of PRFAR and glutamine to IGP, AICAR and glutamate. The HisF subunit catalyzes the cyclization activity that produces IGP and AICAR from PRFAR using the ammonia provided by the HisH subunit. This Burkholderia pseudomallei (strain 1106a) protein is Imidazole glycerol phosphate synthase subunit HisF.